Consider the following 348-residue polypeptide: Protein RecA (348 aa).

Gly-64 to Thr-71 lines the ATP pocket.

This sequence belongs to the RecA family. As to quaternary structure, monomer; forms higher-order oligomers. Interacts with RecU. Interacts with DprA (smf). Interacts with RecD2.

The protein resides in the cytoplasm. The protein localises to the nucleoid. Multifunctional protein involved in homologous recombination, DNA repair and competence. Can catalyze the hydrolysis of (d)ATP in the presence of single-stranded (ss)DNA; prefers dATP at least in vitro, catalyzes the dATP-dependent uptake of ssDNA by duplex DNA, and the dATP-dependent hybridization of homologous ssDNA (strand exchange). RecA-ATP cannot catalyze homologous DNA strand exchange; SsbA and DprA activate strand exchange by RecA-ATP. It interacts with LexA causing its activation and leading to its autocatalytic cleavage. Hydrolysis of ATP in the presence of ssDNA is partially inhibited by RecU. Required for DNA transformation; protects transforming DNA from degradation, possibly in combination with DprA. Blocks replication of both leading and lagging strand DNA in the presence of RecO and SsbA; RecD2 is able to overcome this blockage. In terms of biological role, recruited to repair centers (RCs), foci that are the site of double-stranded DNA break(s), after RecN. Concomitant with the appearance of RecO at the RCs, RecA forms threads that extend from RCs toward the opposite cell half, possibly searching for sequence homology along the sister chromosome. The threads disappear after about 2 hours. Thread formation is absolutely dependent on RecJ or AadAB. Thread formation is also dependent on RarA. This Bacillus subtilis (strain 168) protein is Protein RecA.